The chain runs to 688 residues: MKTRQNKYSIRKFSVGASSILIAALLFMGGGSAQAAEQQQDKGTVENSTTQSIGDGNEKLSEQQSTQNKNVNEKSNVNSITENESLHNETPKNEDLIQQQKDSQNDNKSESVVEQNKENGAFVQNHSEEKPQQEQVELEKHASENNQTLHSKAAQSNEDVKTKPSQLDNTAAKQEDSQKENLSKQDTQSSKTTDLLRATAQNQSKDSQSTEEINKEVNNDTQQVTAKNDDAKVESFNLNSKEEPLKVDKQANPTTDKDKSSKNDKGSQDGLANLESNAVATTNKQSKQQVSEKNEDQTNKSAKQKQYKNNDPIILVHGFNGFTDDINPSVLTHYWGGDKMNIRQDLEENGYEAYEASISAFGSNYDRAVELYYYIKGGRVDYGAAHAAKYGHERYGKTYEGVYKDWKPGQKIHLVGHSMGGQTIRQLEELLRHGNPEEVEYQKQHGGEISPLYQGGHDNMVSSITTLGTPHNGTHASDLLGNEAIVRQLAYDVGKMYGNKDSRVDFGLEHWGLKQKPNESYIQYVKRVQNSKLWKSKDSGLHDLTRDGATDLNRKTSLNPNIVYKTYTGESTHKTLAGKQKADLNMFLPFTITGNLIGKAKEKEWRENDGLVSVISSQHPFNQKYVEATDKNQKGVWQVTPTKHDWDHVDFVGQDSTDTKRTRDELQQFWHGLAEDLVQSEQLTSTNK.

A signal peptide spans 1 to 35; it reads MKTRQNKYSIRKFSVGASSILIAALLFMGGGSAQA. Positions 31–309 are disordered; sequence GSAQAAEQQQ…KSAKQKQYKN (279 aa). The propeptide at 36–302 is removed in mature form; the sequence is AEQQQDKGTV…KNEDQTNKSA (267 aa). Residues 45-54 are compositionally biased toward polar residues; sequence VENSTTQSIG. The segment covering 68-79 has biased composition (low complexity); the sequence is NKNVNEKSNVNS. Composition is skewed to basic and acidic residues over residues 84–95, 103–117, and 126–143; these read ESLHNETPKNED, SQND…EQNK, and HSEE…KHAS. Polar residues predominate over residues 144 to 172; the sequence is ENNQTLHSKAAQSNEDVKTKPSQLDNTAA. Basic and acidic residues predominate over residues 173–183; sequence KQEDSQKENLS. The span at 184 to 211 shows a compositional bias: polar residues; sequence KQDTQSSKTTDLLRATAQNQSKDSQSTE. The segment covering 240 to 267 has biased composition (basic and acidic residues); sequence SKEEPLKVDKQANPTTDKDKSSKNDKGS. Positions 274 to 289 are enriched in polar residues; that stretch reads LESNAVATTNKQSKQQ. Catalysis depends on Ser418, which acts as the Nucleophile. Residue Asp609 is the Charge relay system of the active site. Residue Asp647 coordinates Ca(2+). The Charge relay system role is filled by His648. Ca(2+)-binding residues include Asp650, Asp655, and Asp658.

The protein belongs to the AB hydrolase superfamily. Lipase family.

It localises to the secreted. It carries out the reaction a triacylglycerol + H2O = a diacylglycerol + a fatty acid + H(+). The chain is Lipase (lip) from Staphylococcus epidermidis.